Consider the following 252-residue polypeptide: N-acetylglucosaminyl-phosphatidylinositol de-N-acetylase (252 aa).

The helical transmembrane segment at 2–22 (ELVGFLCVAVAVLTWGFLRVW) threads the bilayer. The Cytoplasmic portion of the chain corresponds to 23 to 252 (NSAERMRSPE…YMRINSLRFL (230 aa)).

It belongs to the PIGL family.

The protein resides in the endoplasmic reticulum membrane. It catalyses the reaction a 6-(N-acetyl-alpha-D-glucosaminyl)-1-(1,2-diacyl-sn-glycero-3-phospho)-1D-myo-inositol + H2O = a 6-(alpha-D-glucosaminyl)-1-(1,2-diacyl-sn-glycero-3-phospho)-1D-myo-inositol + acetate. It functions in the pathway glycolipid biosynthesis; glycosylphosphatidylinositol-anchor biosynthesis. Catalyzes the second step of glycosylphosphatidylinositol (GPI) biosynthesis, which is the de-N-acetylation of N-acetylglucosaminyl-phosphatidylinositol. This Mus musculus (Mouse) protein is N-acetylglucosaminyl-phosphatidylinositol de-N-acetylase (Pigl).